A 529-amino-acid chain; its full sequence is Bifunctional purine biosynthesis protein PurH (529 aa).

Positions 1-148 (MNNARPIRRA…KNHKDTTIIV (148 aa)) constitute an MGS-like domain.

This sequence belongs to the PurH family.

The enzyme catalyses (6R)-10-formyltetrahydrofolate + 5-amino-1-(5-phospho-beta-D-ribosyl)imidazole-4-carboxamide = 5-formamido-1-(5-phospho-D-ribosyl)imidazole-4-carboxamide + (6S)-5,6,7,8-tetrahydrofolate. It carries out the reaction IMP + H2O = 5-formamido-1-(5-phospho-D-ribosyl)imidazole-4-carboxamide. Its pathway is purine metabolism; IMP biosynthesis via de novo pathway; 5-formamido-1-(5-phospho-D-ribosyl)imidazole-4-carboxamide from 5-amino-1-(5-phospho-D-ribosyl)imidazole-4-carboxamide (10-formyl THF route): step 1/1. The protein operates within purine metabolism; IMP biosynthesis via de novo pathway; IMP from 5-formamido-1-(5-phospho-D-ribosyl)imidazole-4-carboxamide: step 1/1. The sequence is that of Bifunctional purine biosynthesis protein PurH from Shewanella piezotolerans (strain WP3 / JCM 13877).